A 351-amino-acid chain; its full sequence is Uroporphyrinogen decarboxylase (351 aa).

Substrate-binding positions include 25–29, Asp74, Tyr151, Ser206, and His325; that span reads RQAGR.

This sequence belongs to the uroporphyrinogen decarboxylase family. As to quaternary structure, homodimer.

Its subcellular location is the cytoplasm. The enzyme catalyses uroporphyrinogen III + 4 H(+) = coproporphyrinogen III + 4 CO2. It functions in the pathway porphyrin-containing compound metabolism; protoporphyrin-IX biosynthesis; coproporphyrinogen-III from 5-aminolevulinate: step 4/4. In terms of biological role, catalyzes the decarboxylation of four acetate groups of uroporphyrinogen-III to yield coproporphyrinogen-III. The chain is Uroporphyrinogen decarboxylase from Chlorobium luteolum (strain DSM 273 / BCRC 81028 / 2530) (Pelodictyon luteolum).